The chain runs to 175 residues: ATP synthase subunit b, chloroplastic (175 aa).

The chain crosses the membrane as a helical span at residues 24–46 (VLNLAVVLAIVLTYVGDALRGLL).

This sequence belongs to the ATPase B chain family. F-type ATPases have 2 components, F(1) - the catalytic core - and F(0) - the membrane proton channel. F(1) has five subunits: alpha(3), beta(3), gamma(1), delta(1), epsilon(1). F(0) has four main subunits: a(1), b(1), b'(1) and c(10-14). The alpha and beta chains form an alternating ring which encloses part of the gamma chain. F(1) is attached to F(0) by a central stalk formed by the gamma and epsilon chains, while a peripheral stalk is formed by the delta, b and b' chains.

The protein resides in the plastid. It is found in the chloroplast thylakoid membrane. Its function is as follows. F(1)F(0) ATP synthase produces ATP from ADP in the presence of a proton or sodium gradient. F-type ATPases consist of two structural domains, F(1) containing the extramembraneous catalytic core and F(0) containing the membrane proton channel, linked together by a central stalk and a peripheral stalk. During catalysis, ATP synthesis in the catalytic domain of F(1) is coupled via a rotary mechanism of the central stalk subunits to proton translocation. Functionally, component of the F(0) channel, it forms part of the peripheral stalk, linking F(1) to F(0). The polypeptide is ATP synthase subunit b, chloroplastic (Chlorella vulgaris (Green alga)).